We begin with the raw amino-acid sequence, 178 residues long: MORN repeat-containing protein 5 (178 aa).

3 MORN repeats span residues 8–30 (YDGD…THTR), 31–53 (YVGE…NGSK), and 54–75 (YEGT…DGLK).

The protein localises to the cell projection. The protein resides in the cilium. It localises to the flagellum. This Danio rerio (Zebrafish) protein is MORN repeat-containing protein 5 (morn5).